Consider the following 116-residue polypeptide: Spexin (116 aa).

A signal peptide spans 1–26 (MKGFKSLVVMTLTLFLVFSFMGNCNS). The propeptide occupies 27–35 (APQRLFERR). Q49 is subject to Glutamine amide. 2 consecutive propeptides follow at residues 50–116 (GRRF…LLNW) and 74–116 (PNSQ…LLNW). Over residues 53–73 (FLSDQSRRKDLSDRPPLERRS) the composition is skewed to basic and acidic residues. Residues 53–80 (FLSDQSRRKDLSDRPPLERRSPNSQQLT) are disordered.

It belongs to the spexin family.

It is found in the secreted. The protein localises to the extracellular space. The protein resides in the cytoplasmic vesicle. It localises to the secretory vesicle. Plays a role as a central modulator of cardiovascular and renal function and nociception. Also plays a role in energy metabolism and storage. Inhibits adrenocortical cell proliferation with minor stimulation on corticosteroid release. In terms of biological role, acts as a ligand for galanin receptors GALR2 and GALR3. Intracerebroventricular administration of the peptide induces an increase in arterial blood pressure, a decrease in both heart rate and renal excretion and delayed natriuresis. Intraventricular administration of the peptide induces antinociceptive activity. Also induces contraction of muscarinic-like stomach smooth muscles. Intraperitoneal administration of the peptide induces a reduction in food consumption and body weight. Inhibits long chain fatty acid uptake into adipocytes. Its function is as follows. Intracerebroventricular administration of the peptide induces a decrease in heart rate, but no change in arterial pressure, and an increase in urine flow rate. Intraventricular administration of the peptide induces antinociceptive activity. The chain is Spexin (SPX) from Bos taurus (Bovine).